The primary structure comprises 358 residues: Neuronal-specific septin-3 (358 aa).

The segment covering 1 to 10 (MSKGLPEART) has biased composition (basic and acidic residues). The disordered stretch occupies residues 1 to 29 (MSKGLPEARTDTAMSELVPEPRPKPAVPM). The Septin-type G domain occupies 58–331 (TGFDFNIMVV…ETYRAKRLND (274 aa)). The segment at 68 to 75 (GQSGLGKS) is G1 motif. 68-75 (GQSGLGKS) contributes to the GTP binding site. Phosphoserine is present on Ser91. Thr102 provides a ligand contact to GTP. Positions 125–128 (DTPG) are G3 motif. The interval 207–210 (AKAD) is G4 motif. GTP contacts are provided by residues 208 to 216 (KADTMTLEE), Gly265, and Arg280.

This sequence belongs to the TRAFAC class TrmE-Era-EngA-EngB-Septin-like GTPase superfamily. Septin GTPase family. As to quaternary structure, septins polymerize into heterooligomeric protein complexes that form filaments, and can associate with cellular membranes, actin filaments and microtubules. GTPase activity is required for filament formation. Phosphorylated by PKG on serine residues. Phosphorylated by PKG on Ser-91. In terms of tissue distribution, brain-specific, with highest expression in the hippocampal CA3 region (at protein level).

It localises to the cytoplasm. It is found in the cytoskeleton. The protein resides in the synapse. Filament-forming cytoskeletal GTPase. May play a role in cytokinesis (Potential). This chain is Neuronal-specific septin-3, found in Rattus norvegicus (Rat).